Consider the following 431-residue polypeptide: Na(+)/H(+) antiporter NhaA 1 (431 aa).

11 helical membrane-spanning segments follow: residues 17–37 (LSGI…NSNF), 56–76 (FIIS…LFFL), 98–118 (MFPF…YIAL), 123–143 (FIGF…MLIL), 154–174 (LFLV…VATV), 182–202 (EYFL…YFDV), 209–229 (LFLG…ATIA), 301–321 (FSAF…LLDF), 329–349 (MIVL…IFGF), 373–393 (VGFI…LAFI), and 400–420 (AIKI…MILI).

The protein belongs to the NhaA Na(+)/H(+) (TC 2.A.33) antiporter family.

It localises to the cell inner membrane. The enzyme catalyses Na(+)(in) + 2 H(+)(out) = Na(+)(out) + 2 H(+)(in). Na(+)/H(+) antiporter that extrudes sodium in exchange for external protons. The protein is Na(+)/H(+) antiporter NhaA 1 of Aliarcobacter butzleri (strain RM4018) (Arcobacter butzleri).